Consider the following 373-residue polypeptide: UDP-N-acetylglucosamine--N-acetylmuramyl-(pentapeptide) pyrophosphoryl-undecaprenol N-acetylglucosamine transferase (373 aa).

UDP-N-acetyl-alpha-D-glucosamine contacts are provided by residues 14–16, Asn128, Arg165, Ser199, and Gln295; that span reads TAG.

It belongs to the glycosyltransferase 28 family. MurG subfamily.

It is found in the cell membrane. The enzyme catalyses di-trans,octa-cis-undecaprenyl diphospho-N-acetyl-alpha-D-muramoyl-L-alanyl-D-glutamyl-meso-2,6-diaminopimeloyl-D-alanyl-D-alanine + UDP-N-acetyl-alpha-D-glucosamine = di-trans,octa-cis-undecaprenyl diphospho-[N-acetyl-alpha-D-glucosaminyl-(1-&gt;4)]-N-acetyl-alpha-D-muramoyl-L-alanyl-D-glutamyl-meso-2,6-diaminopimeloyl-D-alanyl-D-alanine + UDP + H(+). The protein operates within cell wall biogenesis; peptidoglycan biosynthesis. Its function is as follows. Cell wall formation. Catalyzes the transfer of a GlcNAc subunit on undecaprenyl-pyrophosphoryl-MurNAc-pentapeptide (lipid intermediate I) to form undecaprenyl-pyrophosphoryl-MurNAc-(pentapeptide)GlcNAc (lipid intermediate II). The protein is UDP-N-acetylglucosamine--N-acetylmuramyl-(pentapeptide) pyrophosphoryl-undecaprenol N-acetylglucosamine transferase of Mycobacterium sp. (strain KMS).